The sequence spans 479 residues: 6-phosphogluconate dehydrogenase, decarboxylating (479 aa).

NADP(+)-binding positions include 9-14 (GLAVMG), 32-34 (NRT), 74-76 (IQA), and Asn102. Substrate is bound by residues Asn102 and 128-130 (SGG). The active-site Proton acceptor is Lys182. Residue 185-186 (HN) participates in substrate binding. Glu189 functions as the Proton donor in the catalytic mechanism. Substrate contacts are provided by Tyr190, Lys259, Arg286, Arg446, and His452.

Belongs to the 6-phosphogluconate dehydrogenase family. As to quaternary structure, homodimer.

The catalysed reaction is 6-phospho-D-gluconate + NADP(+) = D-ribulose 5-phosphate + CO2 + NADPH. It participates in carbohydrate degradation; pentose phosphate pathway; D-ribulose 5-phosphate from D-glucose 6-phosphate (oxidative stage): step 3/3. Its function is as follows. Catalyzes the oxidative decarboxylation of 6-phosphogluconate to ribulose 5-phosphate and CO(2), with concomitant reduction of NADP to NADPH. The sequence is that of 6-phosphogluconate dehydrogenase, decarboxylating (gnd) from Chlamydia pneumoniae (Chlamydophila pneumoniae).